We begin with the raw amino-acid sequence, 508 residues long: Cytochrome P450 4A12B (508 aa).

The N-terminal stretch at 1-37 is a signal peptide; that stretch reads MSASALSSIRFPGSISEYLQVASVLSLLLLLFKTAQL. Residues glutamate 319 and cysteine 455 each coordinate heme.

It belongs to the cytochrome P450 family. It depends on heme as a cofactor. Expressed in lung, but almost undetectable in the kidneys of five different strains.

It localises to the endoplasmic reticulum membrane. It is found in the microsome membrane. It catalyses the reaction an organic molecule + reduced [NADPH--hemoprotein reductase] + O2 = an alcohol + oxidized [NADPH--hemoprotein reductase] + H2O + H(+). It carries out the reaction dodecanoate + reduced [NADPH--hemoprotein reductase] + O2 = 11-hydroxydodecanoate + oxidized [NADPH--hemoprotein reductase] + H2O + H(+). The enzyme catalyses dodecanoate + reduced [NADPH--hemoprotein reductase] + O2 = 12-hydroxydodecanoate + oxidized [NADPH--hemoprotein reductase] + H2O + H(+). The catalysed reaction is (5Z,8Z,11Z,14Z)-eicosatetraenoate + reduced [NADPH--hemoprotein reductase] + O2 = 18-hydroxy-(5Z,8Z,11Z,14Z)-eicosatetraenoate + oxidized [NADPH--hemoprotein reductase] + H2O + H(+). It catalyses the reaction (5Z,8Z,11Z,14Z)-eicosatetraenoate + reduced [NADPH--hemoprotein reductase] + O2 = 19-hydroxy-(5Z,8Z,11Z,14Z)-eicosatetraenoate + oxidized [NADPH--hemoprotein reductase] + H2O + H(+). It carries out the reaction (5Z,8Z,11Z,14Z)-eicosatetraenoate + reduced [NADPH--hemoprotein reductase] + O2 = 20-hydroxy-(5Z,8Z,11Z,14Z)-eicosatetraenoate + oxidized [NADPH--hemoprotein reductase] + H2O + H(+). The enzyme catalyses (5Z,8Z,11Z,14Z,17Z)-eicosapentaenoate + reduced [NADPH--hemoprotein reductase] + O2 = 19-hydroxy-(5Z,8Z,11Z,14Z,17Z)-eicosapentaenoate + oxidized [NADPH--hemoprotein reductase] + H2O + H(+). The catalysed reaction is (5Z,8Z,11Z,14Z,17Z)-eicosapentaenoate + reduced [NADPH--hemoprotein reductase] + O2 = 20-hydroxy-(5Z,8Z,11Z,14Z,17Z)-eicosapentaenoate + oxidized [NADPH--hemoprotein reductase] + H2O + H(+). It catalyses the reaction (5Z,8Z,11Z,14Z,17Z)-eicosapentaenoate + reduced [NADPH--hemoprotein reductase] + O2 = (17S,18R)-epoxy-(5Z,8Z,11Z,14Z)-eicosatetraenoate + oxidized [NADPH--hemoprotein reductase] + H2O + H(+). It carries out the reaction (5Z,8Z,11Z,14Z,17Z)-eicosapentaenoate + reduced [NADPH--hemoprotein reductase] + O2 = (17R,18S)-epoxy-(5Z,8Z,11Z,14Z)-eicosatetraenoate + oxidized [NADPH--hemoprotein reductase] + H2O + H(+). It participates in lipid metabolism; fatty acid metabolism. Its activity is regulated as follows. Activated by cytochrome b5. The Vmax almost doubles in the presence of cytochrome b5. Its function is as follows. A cytochrome P450 monooxygenase involved in the metabolism of fatty acids and their oxygenated derivatives (oxylipins). Mechanistically, uses molecular oxygen inserting one oxygen atom into a substrate, and reducing the second into a water molecule, with two electrons provided by NADPH via cytochrome P450 reductase (CPR; NADPH-ferrihemoprotein reductase). Catalyzes predominantly the oxidation of the terminal carbon (omega-oxidation) of saturated and unsaturated fatty acids. May act as a major omega-hydroxylase for dodecanoic (lauric) acid in kidney. Participates in omega-hydroxylation of (5Z,8Z,11Z,14Z)-eicosatetraenoic acid (arachidonate) to 20-hydroxyeicosatetraenoic acid (20-HETE), a signaling molecule acting both as vasoconstrictive and natriuretic with overall effect on arterial blood pressure. Acts as an omega-hydroxylase and epoxidase toward (5Z,8Z,11Z,14Z,17Z)-eicosapentaenoc acid (EPA). Catalyzes the epoxidation of the last double bond of EPA with no preferred stereoselectivity, producing both (R,S) and (S,R) stereoisomers. Can also catalyze the omega-1 and omega-2 oxidation of fatty acids with lower efficiency. The sequence is that of Cytochrome P450 4A12B from Mus musculus (Mouse).